Reading from the N-terminus, the 457-residue chain is Reticulon-like protein B18 (457 aa).

The tract at residues 94–183 (AAVTARRSKT…SPSSDQPQDV (90 aa)) is disordered. Basic and acidic residues predominate over residues 124-136 (LRSEAMVDTKENT). Basic residues predominate over residues 149–163 (NQRKQKKLGRSKKEK). Over residues 166 to 183 (SVPLLASPSPSSDQPQDV) the composition is skewed to low complexity. The 191-residue stretch at 195 to 385 (ISDLIMWRDV…AFWNLTSLKT (191 aa)) folds into the Reticulon domain. The next 4 membrane-spanning stretches (helical) occupy residues 208–228 (TLWF…AKGF), 230–250 (FSVF…SFLS), 314–334 (YGYL…SFTI), and 377–397 (FWNL…VVVI). A disordered region spans residues 407 to 457 (DSEDEEEKKQQEKTHPEQQKSPEDKSTSPRSAEEEQALVLVAETKAPKKLY). The span at 413-439 (EKKQQEKTHPEQQKSPEDKSTSPRSAE) shows a compositional bias: basic and acidic residues.

It localises to the endoplasmic reticulum membrane. This chain is Reticulon-like protein B18 (RTNLB18), found in Arabidopsis thaliana (Mouse-ear cress).